We begin with the raw amino-acid sequence, 342 residues long: Inositol-tetrakisphosphate 1-kinase 5 (342 aa).

Positions 25 and 67 each coordinate 1D-myo-inositol 1,3,4-trisphosphate. ATP is bound by residues arginine 102 and lysine 154. The 1D-myo-inositol 1,3,4-trisphosphate site is built by histidine 165 and lysine 197. Residues 186-197 (QEFVNHGGVIFK) and serine 212 contribute to the ATP site. Residues aspartate 283, aspartate 298, and asparagine 300 each contribute to the Mg(2+) site. Asparagine 300 lines the 1D-myo-inositol 1,3,4-trisphosphate pocket.

The protein belongs to the ITPK1 family. As to quaternary structure, monomer. Mg(2+) is required as a cofactor. Expressed in roots, leaves, flowers, anthers and embryos.

It carries out the reaction 1D-myo-inositol 3,4,5,6-tetrakisphosphate + ATP = 1D-myo-inositol 1,3,4,5,6-pentakisphosphate + ADP + H(+). The enzyme catalyses 1D-myo-inositol 1,3,4-trisphosphate + ATP = 1D-myo-inositol 1,3,4,5-tetrakisphosphate + ADP + H(+). It catalyses the reaction 1D-myo-inositol 1,3,4-trisphosphate + ATP = 1D-myo-inositol 1,3,4,6-tetrakisphosphate + ADP + H(+). Its function is as follows. Kinase that can phosphorylate various inositol polyphosphate such as Ins(3,4,5,6)P4 or Ins(1,3,4)P3 and participates in phytic acid biosynthesis in developing seeds. Phytic acid is the primary storage form of phosphorus in cereal grains and other plant seeds. The polypeptide is Inositol-tetrakisphosphate 1-kinase 5 (ITPK5) (Oryza sativa subsp. japonica (Rice)).